We begin with the raw amino-acid sequence, 26 residues long: GTP-binding protein Rheb (26 aa).

5 residues coordinate GTP: S1, S2, V13, Y16, and T19. S1 is a binding site for Mg(2+). An Effector region motif is present at residues 16-24; sequence YDPTIENTF. Mg(2+) is bound at residue T19.

This sequence belongs to the small GTPase superfamily. Rheb family.

The catalysed reaction is GTP + H2O = GDP + phosphate + H(+). Its function is as follows. Binds GTP and exhibits intrinsic GTPase activity. The protein is GTP-binding protein Rheb of Crocodylus siamensis (Siamese crocodile).